Consider the following 430-residue polypeptide: MSLMTKLGLRTLVASCLIAVGGAANAQLNVLVTGVGSTQFPIATANFANEANSPQQVSTIVRQDLQRSGKFTNIDAGATPVSETDSVDLGSWKAKGANAFVSGSVNRLPNGQYEVRFKLYDTVKGESLGGLVLVSPESGLRMSAHKVADYIYAKLMGGRGVFATRLSYVIKTGGRYQLQISDSDGQDAHIALSSPEPIISPAWSPDGTKVAYVSFEKKKPIVYIHDLPTGRRIVVSDQKGNNSAPAWSPDGRTLAVALSRTGNTQIFAVNADGSGLRRLTQGSSIDTEPCFSPDGQSIYFTSDRGGQPQIYKMSAQGENAGAAQRVTFTGSYNTSPRVSPDGKQLAYISRVGGGFKLYIQDLQGNTATGLTDTTHDESPSFAANGQYILYATQVNGRGVLAAVSTDGRTRQVLSVQGGSVREPSWGPFMQ.

The first 26 residues, 1 to 26 (MSLMTKLGLRTLVASCLIAVGGAANA), serve as a signal peptide directing secretion.

It belongs to the TolB family. As to quaternary structure, the Tol-Pal system is composed of five core proteins: the inner membrane proteins TolA, TolQ and TolR, the periplasmic protein TolB and the outer membrane protein Pal. They form a network linking the inner and outer membranes and the peptidoglycan layer.

Its subcellular location is the periplasm. Its function is as follows. Part of the Tol-Pal system, which plays a role in outer membrane invagination during cell division and is important for maintaining outer membrane integrity. In Paraburkholderia xenovorans (strain LB400), this protein is Tol-Pal system protein TolB.